The primary structure comprises 833 residues: Leucine--tRNA ligase (833 aa).

Positions 41 to 52 (PYPSGAGLHVGH) match the 'HIGH' region motif. The short motif at 610 to 614 (KMSKS) is the 'KMSKS' region element. An ATP-binding site is contributed by lysine 613.

This sequence belongs to the class-I aminoacyl-tRNA synthetase family.

Its subcellular location is the cytoplasm. It carries out the reaction tRNA(Leu) + L-leucine + ATP = L-leucyl-tRNA(Leu) + AMP + diphosphate. The sequence is that of Leucine--tRNA ligase from Streptococcus equi subsp. zooepidemicus (strain H70).